A 345-amino-acid chain; its full sequence is Fructose-bisphosphate aldolase (345 aa).

Serine 53 provides a ligand contact to D-glyceraldehyde 3-phosphate. The Proton donor role is filled by aspartate 95. Zn(2+)-binding residues include histidine 96, aspartate 131, glutamate 161, and histidine 212. Glycine 213 lines the dihydroxyacetone phosphate pocket. Residue histidine 252 coordinates Zn(2+). Dihydroxyacetone phosphate is bound by residues 253–255 (GGS) and 274–277 (NVDT).

This sequence belongs to the class II fructose-bisphosphate aldolase family. Zn(2+) serves as cofactor.

The catalysed reaction is beta-D-fructose 1,6-bisphosphate = D-glyceraldehyde 3-phosphate + dihydroxyacetone phosphate. Its pathway is carbohydrate degradation; glycolysis; D-glyceraldehyde 3-phosphate and glycerone phosphate from D-glucose: step 4/4. Catalyzes the aldol condensation of dihydroxyacetone phosphate (DHAP or glycerone-phosphate) with glyceraldehyde 3-phosphate (G3P) to form fructose 1,6-bisphosphate (FBP) in gluconeogenesis and the reverse reaction in glycolysis. This Mycobacterium leprae (strain TN) protein is Fructose-bisphosphate aldolase (fba).